A 336-amino-acid chain; its full sequence is DNA-directed RNA polymerase subunit alpha (336 aa).

The tract at residues Met-1 to Asp-232 is alpha N-terminal domain (alpha-NTD). The segment at Phe-248–Tyr-336 is alpha C-terminal domain (alpha-CTD).

It belongs to the RNA polymerase alpha chain family. In terms of assembly, homodimer. The RNAP catalytic core consists of 2 alpha, 1 beta, 1 beta' and 1 omega subunit. When a sigma factor is associated with the core the holoenzyme is formed, which can initiate transcription.

The enzyme catalyses RNA(n) + a ribonucleoside 5'-triphosphate = RNA(n+1) + diphosphate. DNA-dependent RNA polymerase catalyzes the transcription of DNA into RNA using the four ribonucleoside triphosphates as substrates. The sequence is that of DNA-directed RNA polymerase subunit alpha from Rhizobium etli (strain CIAT 652).